A 465-amino-acid polypeptide reads, in one-letter code: Argininosuccinate lyase (465 aa).

Belongs to the lyase 1 family. Argininosuccinate lyase subfamily.

It localises to the cytoplasm. The catalysed reaction is 2-(N(omega)-L-arginino)succinate = fumarate + L-arginine. The protein operates within amino-acid biosynthesis; L-arginine biosynthesis; L-arginine from L-ornithine and carbamoyl phosphate: step 3/3. This is Argininosuccinate lyase from Rhodopseudomonas palustris (strain BisB5).